Consider the following 102-residue polypeptide: ATP-dependent Clp protease adapter protein ClpS (102 aa).

Belongs to the ClpS family. As to quaternary structure, binds to the N-terminal domain of the chaperone ClpA.

Its function is as follows. Involved in the modulation of the specificity of the ClpAP-mediated ATP-dependent protein degradation. The sequence is that of ATP-dependent Clp protease adapter protein ClpS from Shewanella denitrificans (strain OS217 / ATCC BAA-1090 / DSM 15013).